We begin with the raw amino-acid sequence, 562 residues long: O-fucosyltransferase 4 (562 aa).

Residues 10–46 (SIQNRLPGSDHTTPSPPTSPHLCRSRSKSSSVSGQQQ) are disordered. Positions 37 to 46 (KSSSVSGQQQ) are enriched in low complexity. A helical; Signal-anchor for type II membrane protein membrane pass occupies residues 67 to 87 (GILLFAPIIYISCMLFHLHAA). Asparagine 122, asparagine 146, asparagine 185, and asparagine 239 each carry an N-linked (GlcNAc...) asparagine glycan. 332–334 (HLR) serves as a coordination point for substrate. Asparagine 404, asparagine 420, asparagine 450, and asparagine 555 each carry an N-linked (GlcNAc...) asparagine glycan.

The protein belongs to the glycosyltransferase GT106 family.

It is found in the membrane. Its pathway is glycan metabolism. This chain is O-fucosyltransferase 4, found in Arabidopsis thaliana (Mouse-ear cress).